The chain runs to 334 residues: MATIKDVARLAGVSTTTVSHVINKTRFVAEATQEKVMKAVDELNYAPSAVARSLKCNTTRTIGMLVTQSTNLFFSEVIDGVESYCYRQGYTLILCNTGGIYEKQRDYIRMLAEKRVDGILVMCSDLTEELREMLDKHADIPKVIMDWGPISSQADKIIDNSEEGGYLATKYLIDNGHTKIACLSGHFEKAACQERIQGFKRAMKEANITLNNEWILEGNFECDTAVMAADKIASWQDRPTAVFCFNDTMALGLMSRLQQLGLRIPEDISVIGYDNIELAEYFSPPLTTIHQPKRRVGKNAFEILLERIKDKEHDKRVFEMHPELVVRDTVKKIN.

Residues 2–56 (ATIKDVARLAGVSTTTVSHVINKTRFVAEATQEKVMKAVDELNYAPSAVARSLKC) enclose the HTH lacI-type domain. Residues 4 to 23 (IKDVARLAGVSTTTVSHVIN) constitute a DNA-binding region (H-T-H motif). Residues 48–56 (SAVARSLKC) mediate DNA binding. Residues Phe-73, Lys-189, Phe-220, and Asp-274 each contribute to the hypoxanthine site.

Homodimer.

It participates in purine metabolism; purine nucleotide biosynthesis [regulation]. Its function is as follows. Is the main repressor of the genes involved in the de novo synthesis of purine nucleotides, regulating purB, purC, purEK, purF, purHD, purL, purMN and guaBA expression. PurR is allosterically activated to bind its cognate DNA by binding the purine corepressors, hypoxanthine or guanine, thereby effecting transcription repression. In Vibrio vulnificus (strain CMCP6), this protein is HTH-type transcriptional repressor PurR.